A 515-amino-acid chain; its full sequence is ATP synthase subunit alpha (515 aa).

171–178 contacts ATP; it reads GDRQTGKT.

It belongs to the ATPase alpha/beta chains family. F-type ATPases have 2 components, CF(1) - the catalytic core - and CF(0) - the membrane proton channel. CF(1) has five subunits: alpha(3), beta(3), gamma(1), delta(1), epsilon(1). CF(0) has three main subunits: a(1), b(2) and c(9-12). The alpha and beta chains form an alternating ring which encloses part of the gamma chain. CF(1) is attached to CF(0) by a central stalk formed by the gamma and epsilon chains, while a peripheral stalk is formed by the delta and b chains.

The protein resides in the cell inner membrane. The enzyme catalyses ATP + H2O + 4 H(+)(in) = ADP + phosphate + 5 H(+)(out). Produces ATP from ADP in the presence of a proton gradient across the membrane. The alpha chain is a regulatory subunit. The polypeptide is ATP synthase subunit alpha (Stenotrophomonas maltophilia (strain R551-3)).